The primary structure comprises 600 residues: Pyranose dehydrogenase 2 (600 aa).

Positions 1–25 are cleaved as a signal peptide; sequence MLSRVAKLNSRLVSLALLGSQIAFG. Asparagine 99 and asparagine 114 each carry an N-linked (GlcNAc...) asparagine glycan. At histidine 127 the chain carries Tele-8alpha-FAD histidine. Residues asparagine 199, asparagine 275, and asparagine 342 are each glycosylated (N-linked (GlcNAc...) asparagine). Histidine 535 acts as the Proton acceptor in catalysis. Residue histidine 579 is part of the active site.

Belongs to the GMC oxidoreductase family. As to quaternary structure, monomer. It depends on FAD as a cofactor. N-glycosylated.

The protein localises to the secreted. It catalyses the reaction pyranose + acceptor = pyranos-2-ulose + reduced acceptor.. The catalysed reaction is pyranose + acceptor = pyranos-3-ulose + reduced acceptor.. It carries out the reaction pyranose + acceptor = pyranos-2,3-diulose + reduced acceptor.. The enzyme catalyses a pyranoside + acceptor = a pyranosid-3-ulose + reduced acceptor.. It catalyses the reaction a pyranoside + acceptor = a pyranosid-3,4-diulose + reduced acceptor.. Its function is as follows. Catalyzes the single-oxidation or sequential double oxidation reaction of carbohydrates primarily at carbon-2 and/or carbon-3 with the concomitant reduction of the flavin. The enzyme exhibits a broad sugar substrate specificity, oxidizing different aldopyranoses to the corresponding C-1, C-2, C-3 or C-1,2, C-2,3 and C-3,4 (di)dehydro sugars with substrate-specific regioselectivity. Accepts only a narrow range of electron acceptors such as substituted benzoquinones and complexed metal ions and reacts extremely slowly with O(2) as acceptor. May play a role in the natural recycling of plant matter by oxidizing all major monosaccharides in lignocellulose and by reducing quinone compounds or reactive radical species generated during lignin depolymerization. This chain is Pyranose dehydrogenase 2, found in Leucoagaricus meleagris (Western flat-topped agaric).